Here is a 249-residue protein sequence, read N- to C-terminus: MAAKDRLPIFPSRGAQTLMKSRLAGATKGHGLLKKKADALQMRFRLILGKIIETKTLMGQVMKEAAFSLAEVKFTTGDINQIVLQNVTKAQIKIRTKKDNVAGVTLPIFEPYTDGVDTYELAGLARGGQQLAKLKKNYQSAVRLLVQLASLQTSFVTLDDVIKVTNRRVNAIEHVIIPRINRTIEYIISELDELEREEFYRLKKIQDKKREARKASDKLRAEQRLLGQMAEAQEVQNILDEDGDEDLLF.

The protein belongs to the V-ATPase D subunit family. V-ATPase is a heteromultimeric enzyme made up of two complexes: the ATP-hydrolytic V1 complex and the proton translocation V0 complex. The V1 complex consists of three catalytic AB heterodimers that form a heterohexamer, three peripheral stalks each consisting of EG heterodimers, one central rotor including subunits D and F, and the regulatory subunits C and H. The proton translocation complex V0 consists of the proton transport subunit a, a ring of proteolipid subunits c9c'', rotary subunit d, subunits e and f, and the accessory subunits VhaAC45 and ATP6AP2.

Subunit of the V1 complex of vacuolar(H+)-ATPase (V-ATPase), a multisubunit enzyme composed of a peripheral complex (V1) that hydrolyzes ATP and a membrane integral complex (V0) that translocates protons. V-ATPase is responsible for acidifying and maintaining the pH of intracellular compartments and in some cell types, is targeted to the plasma membrane, where it is responsible for acidifying the extracellular environment. This is V-type proton ATPase subunit D 2 (Vha36-3) from Drosophila melanogaster (Fruit fly).